We begin with the raw amino-acid sequence, 583 residues long: Aspartate--tRNA ligase (583 aa).

Glu174 is a binding site for L-aspartate. Positions 198–201 (QITK) are aspartate. Residue Arg220 participates in L-aspartate binding. ATP contacts are provided by residues 220–222 (RDE) and Gln229. His443 serves as a coordination point for L-aspartate. Glu477 serves as a coordination point for ATP. Residue Arg484 coordinates L-aspartate. 529-532 (GLDR) contacts ATP.

This sequence belongs to the class-II aminoacyl-tRNA synthetase family. Type 1 subfamily. In terms of assembly, homodimer.

The protein localises to the cytoplasm. The enzyme catalyses tRNA(Asp) + L-aspartate + ATP = L-aspartyl-tRNA(Asp) + AMP + diphosphate. Functionally, catalyzes the attachment of L-aspartate to tRNA(Asp) in a two-step reaction: L-aspartate is first activated by ATP to form Asp-AMP and then transferred to the acceptor end of tRNA(Asp). The protein is Aspartate--tRNA ligase of Streptococcus thermophilus (strain CNRZ 1066).